The following is a 162-amino-acid chain: MLPLHISLEKKKVVIAGGGSIALRRLKTVISEGADITLVSPDVEPEIKQMAEERRIKWEKRTIEKEDYLNAFFIIAATDNAAVNKEIAQSASPFQLVNCVSDAELGNVYMPKIVKRGHVTVSVSTSGASPKHTKELAENVDKLIDGDFVAEVNRLYQMRRKK.

Residues 20–21 and 41–42 contribute to the NAD(+) site; these read SI and PD.

This sequence belongs to the precorrin-2 dehydrogenase / sirohydrochlorin ferrochelatase family.

It carries out the reaction precorrin-2 + NAD(+) = sirohydrochlorin + NADH + 2 H(+). Its pathway is cofactor biosynthesis; adenosylcobalamin biosynthesis; sirohydrochlorin from precorrin-2: step 1/1. The protein operates within porphyrin-containing compound metabolism; siroheme biosynthesis; sirohydrochlorin from precorrin-2: step 1/1. Catalyzes the dehydrogenation of precorrin-2 to form sirohydrochlorin which is used as a precursor in both siroheme biosynthesis and in the anaerobic branch of adenosylcobalamin biosynthesis. This is Precorrin-2 dehydrogenase (sirC) from Bacillus subtilis (strain 168).